A 160-amino-acid polypeptide reads, in one-letter code: Cytochrome b6-f complex subunit 4 (160 aa).

Transmembrane regions (helical) follow at residues 36–56, 95–115, and 128–148; these read LLYIFPVVILGTIACVVGLAV, LLGIALQTLVPLGLMLVPFIE, and VAMTVFLFGTFTTIYLGIGAA.

The protein belongs to the cytochrome b family. PetD subfamily. The 4 large subunits of the cytochrome b6-f complex are cytochrome b6, subunit IV (17 kDa polypeptide, PetD), cytochrome f and the Rieske protein, while the 4 small subunits are PetG, PetL, PetM and PetN. The complex functions as a dimer.

The protein resides in the cellular thylakoid membrane. Component of the cytochrome b6-f complex, which mediates electron transfer between photosystem II (PSII) and photosystem I (PSI), cyclic electron flow around PSI, and state transitions. This chain is Cytochrome b6-f complex subunit 4, found in Synechococcus sp. (strain CC9902).